The following is a 598-amino-acid chain: Phenylalanine--tRNA ligase beta subunit, cytoplasmic (598 aa).

Residues 303-383 (LAVYDMEVPL…IAYGFNNIPT (81 aa)) form the B5 domain. Residues aspartate 361, aspartate 367, glutamate 370, and aspartate 371 each coordinate Mg(2+).

Belongs to the phenylalanyl-tRNA synthetase beta subunit family. Type 2 subfamily. In terms of assembly, tetramer of two alpha and two beta subunits. Mg(2+) is required as a cofactor.

It localises to the cytoplasm. The protein localises to the cytosol. It carries out the reaction tRNA(Phe) + L-phenylalanine + ATP = L-phenylalanyl-tRNA(Phe) + AMP + diphosphate + H(+). This chain is Phenylalanine--tRNA ligase beta subunit, cytoplasmic, found in Arabidopsis thaliana (Mouse-ear cress).